Reading from the N-terminus, the 468-residue chain is Ribulose bisphosphate carboxylase large chain (468 aa).

The residue at position 5 (K5) is an N6,N6,N6-trimethyllysine. 2 residues coordinate substrate: N114 and T164. K166 (proton acceptor) is an active-site residue. K168 contacts substrate. 3 residues coordinate Mg(2+): K192, D194, and E195. K192 is subject to N6-carboxylysine. Residue H285 is the Proton acceptor of the active site. 3 residues coordinate substrate: R286, H318, and S370.

Belongs to the RuBisCO large chain family. Type I subfamily. Heterohexadecamer of 8 large chains and 8 small chains; disulfide-linked. The disulfide link is formed within the large subunit homodimers. Requires Mg(2+) as cofactor. In terms of processing, the disulfide bond which can form in the large chain dimeric partners within the hexadecamer appears to be associated with oxidative stress and protein turnover.

The protein resides in the plastid. It localises to the chloroplast. The enzyme catalyses 2 (2R)-3-phosphoglycerate + 2 H(+) = D-ribulose 1,5-bisphosphate + CO2 + H2O. The catalysed reaction is D-ribulose 1,5-bisphosphate + O2 = 2-phosphoglycolate + (2R)-3-phosphoglycerate + 2 H(+). Functionally, ruBisCO catalyzes two reactions: the carboxylation of D-ribulose 1,5-bisphosphate, the primary event in carbon dioxide fixation, as well as the oxidative fragmentation of the pentose substrate in the photorespiration process. Both reactions occur simultaneously and in competition at the same active site. In Solandra grandiflora (Chalice vine), this protein is Ribulose bisphosphate carboxylase large chain.